A 334-amino-acid chain; its full sequence is MTIPATILDTARTQVLEQGIGLNQQQLMEVLTLPEEQIPDLMELAHQVRLKWCGEEIEVEGIISLKTGGCPEDCHFCSQSGLFESPVRSVWLDIPNLVEAAKQTAKTGATEFCIVAAVKGPDERLMTQLEEAVLAIHSEVEIEVAASIGTLNKEQVDRLAAAGVHRYNHNLETARSYFPEVVTTHTWEERRETLRLVAEAGMEVCSGGILGMGETLEQRAEFAVQLAELDPHEVPMNFLDPRPGTPFADRELMDSRDALRSIGAFRLAMPHTMLRFAGGRELTLGDKGSEQALLGGINAMIVGNYLTTLGRPMEDDLDMMDRLQLPIKVLNKVI.

One can recognise a Radical SAM core domain in the interval 55-280 (EEIEVEGIIS…HTMLRFAGGR (226 aa)). 3 residues coordinate [4Fe-4S] cluster: cysteine 70, cysteine 74, and cysteine 77. Residues cysteine 113, cysteine 205, and arginine 275 each coordinate [2Fe-2S] cluster.

Belongs to the radical SAM superfamily. Biotin synthase family. As to quaternary structure, homodimer. The cofactor is [4Fe-4S] cluster. Requires [2Fe-2S] cluster as cofactor.

The enzyme catalyses (4R,5S)-dethiobiotin + (sulfur carrier)-SH + 2 reduced [2Fe-2S]-[ferredoxin] + 2 S-adenosyl-L-methionine = (sulfur carrier)-H + biotin + 2 5'-deoxyadenosine + 2 L-methionine + 2 oxidized [2Fe-2S]-[ferredoxin]. Its pathway is cofactor biosynthesis; biotin biosynthesis; biotin from 7,8-diaminononanoate: step 2/2. In terms of biological role, catalyzes the conversion of dethiobiotin (DTB) to biotin by the insertion of a sulfur atom into dethiobiotin via a radical-based mechanism. This chain is Biotin synthase, found in Corynebacterium glutamicum (strain R).